The following is a 162-amino-acid chain: Phosphopantetheine adenylyltransferase (162 aa).

Ser9 contributes to the substrate binding site. Residues 9 to 10 (SF) and His17 each bind ATP. The substrate site is built by Lys41, Ile77, and Lys91. Residues 92 to 94 (GLR), Glu102, and 126 to 132 (YAFLSSS) contribute to the ATP site.

It belongs to the bacterial CoaD family. Homohexamer. It depends on Mg(2+) as a cofactor.

The protein resides in the cytoplasm. The catalysed reaction is (R)-4'-phosphopantetheine + ATP + H(+) = 3'-dephospho-CoA + diphosphate. The protein operates within cofactor biosynthesis; coenzyme A biosynthesis; CoA from (R)-pantothenate: step 4/5. Functionally, reversibly transfers an adenylyl group from ATP to 4'-phosphopantetheine, yielding dephospho-CoA (dPCoA) and pyrophosphate. The protein is Phosphopantetheine adenylyltransferase of Frankia casuarinae (strain DSM 45818 / CECT 9043 / HFP020203 / CcI3).